We begin with the raw amino-acid sequence, 101 residues long: MAKKSMIEREKKRERLVAQYAAKRAELKEIANDESRPMEERFKARLKLAKLPRNSSATRLHNRCQLTGRPHAYYRKLKVSRIMLRELGSAGQIPGMVKSSW.

It belongs to the universal ribosomal protein uS14 family. As to quaternary structure, part of the 30S ribosomal subunit. Contacts proteins S3 and S10.

In terms of biological role, binds 16S rRNA, required for the assembly of 30S particles and may also be responsible for determining the conformation of the 16S rRNA at the A site. The polypeptide is Small ribosomal subunit protein uS14 (Ruegeria pomeroyi (strain ATCC 700808 / DSM 15171 / DSS-3) (Silicibacter pomeroyi)).